The sequence spans 142 residues: uncharacterized protein (142 aa).

Homodimer.

This is an uncharacterized protein from Bacillus subtilis (strain 168).